The primary structure comprises 329 residues: Thioredoxin domain-containing protein 6 (329 aa).

In terms of domain architecture, Thioredoxin spans 11-115 (QVNINTQELW…QKTILQQLEA (105 aa)). The segment at 157–303 (GKTCTLGIIK…LFPSFKFSDK (147 aa)) is NDK. Positions 303 to 329 (KDKEAPPGAEAQTMVGPVEDPCMSERI) are disordered.

It belongs to the NDK family. As to quaternary structure, monomer and homodimer. In terms of tissue distribution, expressed in lung airway epithelium (at protein level).

The protein resides in the cytoplasm. It is found in the cytoskeleton. It localises to the cilium axoneme. Its subcellular location is the dynein axonemal particle. In terms of biological role, may be a regulator of microtubule physiology. This is Thioredoxin domain-containing protein 6 from Mus musculus (Mouse).